The following is a 323-amino-acid chain: tRNA dimethylallyltransferase (323 aa).

13 to 20 (GPTASGKT) serves as a coordination point for ATP. 15-20 (TASGKT) is a substrate binding site. 4 interaction with substrate tRNA regions span residues 42–45 (DSAL), 166–170 (QRIQR), 251–256 (RCVGYR), and 284–291 (KRQITWLR).

Belongs to the IPP transferase family. Monomer. Mg(2+) serves as cofactor.

It carries out the reaction adenosine(37) in tRNA + dimethylallyl diphosphate = N(6)-dimethylallyladenosine(37) in tRNA + diphosphate. In terms of biological role, catalyzes the transfer of a dimethylallyl group onto the adenine at position 37 in tRNAs that read codons beginning with uridine, leading to the formation of N6-(dimethylallyl)adenosine (i(6)A). The sequence is that of tRNA dimethylallyltransferase from Acidovorax ebreus (strain TPSY) (Diaphorobacter sp. (strain TPSY)).